A 161-amino-acid chain; its full sequence is Allophycocyanin alpha chain (161 aa).

N4-methylasparagine is present on Asn-71. Cys-81 lines the (2R,3E)-phycocyanobilin pocket.

It belongs to the phycobiliprotein family. Heterodimer of an alpha and a beta chain. Post-translationally, contains one covalently linked phycocyanobilin chromophore.

Its subcellular location is the plastid. The protein resides in the chloroplast thylakoid membrane. In terms of biological role, light-harvesting photosynthetic bile pigment-protein from the phycobiliprotein complex. Allophycocyanin has a maximum absorption at approximately 650 nanometers. The chain is Allophycocyanin alpha chain (apcA) from Aglaothamnion neglectum (Red alga).